Reading from the N-terminus, the 350-residue chain is Leucine-rich repeat-containing protein 23 (350 aa).

Positions 1 to 54 (MEDETLEDGPEEEEEDEEEGTAEETNQDVTERDEEEEAEKDEEEDKEEEEEAEK) are enriched in acidic residues. The segment at 1-64 (MEDETLEDGP…EEPPPHMPLS (64 aa)) is disordered. 8 LRR repeats span residues 107–128 (HLRYVDLSQNSLQDLSPLGALT), 129–150 (HLLSLRADHNQLVSVSGLGELP), 151–171 (YLQVASFAQNRIKSLQGFGHP), 172–193 (RLETLNLIGNELRDLEGLECSN), 196–216 (SLHTLELRSNQLLSTAGLNLP), 217–238 (SLRELYLGQNNISRLEGLEALV), 239–260 (NLTTLHLRDNQLESLDGFSEHL), and 262–283 (ALQYLNLRSNMVAKLQEVQKLY). An LRRCT domain is found at 296–334 (NPCEEEEGYRMETLIALPQLERLDKDFFEEEEKREAAET). Residues 314–344 (QLERLDKDFFEEEEKREAAETKKAREEEMAE) are a coiled coil. Residues 325–350 (EEEKREAAETKKAREEEMAEPGEKGN) are disordered.

The protein localises to the cytoplasm. It is found in the cytoskeleton. Its subcellular location is the flagellum axoneme. This is Leucine-rich repeat-containing protein 23 (lrrc23) from Xenopus tropicalis (Western clawed frog).